We begin with the raw amino-acid sequence, 34 residues long: uncharacterized protein (34 aa).

A disordered region spans residues 1–34 (MRLRRLFKQPSTRVLGVTNCPRQQGHQKRREQPD). The segment covering 25-34 (GHQKRREQPD) has biased composition (basic residues).

This is an uncharacterized protein from Schizosaccharomyces pombe (strain 972 / ATCC 24843) (Fission yeast).